We begin with the raw amino-acid sequence, 192 residues long: UPF0312 protein Spro_1887 (192 aa).

An N-terminal signal peptide occupies residues 1–23; sequence MLKKTVLGLTAGAMLLSAGSALA.

It belongs to the UPF0312 family. Type 1 subfamily.

It localises to the periplasm. The protein is UPF0312 protein Spro_1887 of Serratia proteamaculans (strain 568).